Consider the following 187-residue polypeptide: NADH-dependent FMN reductase SfnF (187 aa).

Belongs to the SsuE family.

It catalyses the reaction FMNH2 + NAD(+) = FMN + NADH + 2 H(+). Functionally, involved in the dimethyl sulfide degradation pathway. Catalyzes the NADH-dependent reduction of FMN. This is NADH-dependent FMN reductase SfnF from Pseudomonas fluorescens (strain Pf0-1).